The primary structure comprises 514 residues: CENP-B homolog protein 1 (514 aa).

An HTH CENPB-type domain is found at 69–144; sequence DIKKIRAPKF…RRRHYIQQSA (76 aa).

It localises to the nucleus. Its subcellular location is the chromosome. The protein localises to the centromere. In terms of biological role, binds to centromeric K-type repeat DNA and ARS3002 DNA. The CBH-binding consensus sequence is Py-Pu-A-T-A-T-Py-Pu-T-A. This Schizosaccharomyces pombe (strain 972 / ATCC 24843) (Fission yeast) protein is CENP-B homolog protein 1 (cbh1).